The sequence spans 159 residues: F1845 fimbrial protein (159 aa).

The first 21 residues, 1 to 21 (MKKLAIMAAASMIFTVGSAQA), serve as a signal peptide directing secretion.

It belongs to the Dr-adhesin family.

Its subcellular location is the fimbrium. Functionally, hemagglutinins of uropathogenic E.coli mediate adherence to the upper urinary tract. These adhesins bind to the Dr blood group antigen and also agglutinate human erythrocytes in the presence of D-mannose (mannose-resistant hemagglutination (MRHA)). C1845 is a strain responsible for diarrheal disease. This is F1845 fimbrial protein (daaE) from Escherichia coli.